A 262-amino-acid chain; its full sequence is Cytochrome c oxidase subunit 2 (262 aa).

Helical transmembrane passes span H31–I51 and I72–L92. H175, C210, E212, C214, H218, and M221 together coordinate Cu cation. E212 provides a ligand contact to Mg(2+).

It belongs to the cytochrome c oxidase subunit 2 family. In terms of assembly, component of the cytochrome c oxidase (complex IV, CIV), a multisubunit enzyme composed of a catalytic core of 3 subunits and several supernumerary subunits. The complex exists as a monomer or a dimer and forms supercomplexes (SCs) in the inner mitochondrial membrane with ubiquinol-cytochrome c oxidoreductase (cytochrome b-c1 complex, complex III, CIII). Requires Cu cation as cofactor.

The protein resides in the mitochondrion inner membrane. It carries out the reaction 4 Fe(II)-[cytochrome c] + O2 + 8 H(+)(in) = 4 Fe(III)-[cytochrome c] + 2 H2O + 4 H(+)(out). In terms of biological role, component of the cytochrome c oxidase, the last enzyme in the mitochondrial electron transport chain which drives oxidative phosphorylation. The respiratory chain contains 3 multisubunit complexes succinate dehydrogenase (complex II, CII), ubiquinol-cytochrome c oxidoreductase (cytochrome b-c1 complex, complex III, CIII) and cytochrome c oxidase (complex IV, CIV), that cooperate to transfer electrons derived from NADH and succinate to molecular oxygen, creating an electrochemical gradient over the inner membrane that drives transmembrane transport and the ATP synthase. Cytochrome c oxidase is the component of the respiratory chain that catalyzes the reduction of oxygen to water. Electrons originating from reduced cytochrome c in the intermembrane space (IMS) are transferred via the dinuclear copper A center (CU(A)) of subunit 2 and heme A of subunit 1 to the active site in subunit 1, a binuclear center (BNC) formed by heme A3 and copper B (CU(B)). The BNC reduces molecular oxygen to 2 water molecules using 4 electrons from cytochrome c in the IMS and 4 protons from the mitochondrial matrix. The protein is Cytochrome c oxidase subunit 2 (COX2) of Candida albicans (strain SC5314 / ATCC MYA-2876) (Yeast).